A 355-amino-acid chain; its full sequence is UDP-N-acetylglucosamine--N-acetylmuramyl-(pentapeptide) pyrophosphoryl-undecaprenol N-acetylglucosamine transferase (355 aa).

UDP-N-acetyl-alpha-D-glucosamine-binding positions include 13–15, N125, R162, S190, I244, and Q289; that span reads TGG.

It belongs to the glycosyltransferase 28 family. MurG subfamily.

It localises to the cell inner membrane. The catalysed reaction is di-trans,octa-cis-undecaprenyl diphospho-N-acetyl-alpha-D-muramoyl-L-alanyl-D-glutamyl-meso-2,6-diaminopimeloyl-D-alanyl-D-alanine + UDP-N-acetyl-alpha-D-glucosamine = di-trans,octa-cis-undecaprenyl diphospho-[N-acetyl-alpha-D-glucosaminyl-(1-&gt;4)]-N-acetyl-alpha-D-muramoyl-L-alanyl-D-glutamyl-meso-2,6-diaminopimeloyl-D-alanyl-D-alanine + UDP + H(+). Its pathway is cell wall biogenesis; peptidoglycan biosynthesis. Its function is as follows. Cell wall formation. Catalyzes the transfer of a GlcNAc subunit on undecaprenyl-pyrophosphoryl-MurNAc-pentapeptide (lipid intermediate I) to form undecaprenyl-pyrophosphoryl-MurNAc-(pentapeptide)GlcNAc (lipid intermediate II). The chain is UDP-N-acetylglucosamine--N-acetylmuramyl-(pentapeptide) pyrophosphoryl-undecaprenol N-acetylglucosamine transferase from Neisseria meningitidis serogroup C / serotype 2a (strain ATCC 700532 / DSM 15464 / FAM18).